Here is a 117-residue protein sequence, read N- to C-terminus: Ig heavy chain V region 5-84 (117 aa).

Residues 1–19 (MNFGLSLIFLVLVLKGVLC) form the signal peptide. Residues 20-49 (EVKLVESGGGLVQPGGSLKLSCAASGFTFS) form a framework-1 region. The cysteines at positions 41 and 115 are disulfide-linked. The complementarity-determining-1 stretch occupies residues 50 to 54 (SYTMS). Residues 55-68 (WVRQTPEKRLEWVA) form a framework-2 region. Residues 69-85 (YISNGGGSTYYPDTVKG) are complementarity-determining-2. The interval 86–117 (RFTISRDNAKNNLYLQMSSLKSEDTAMYYCAR) is framework-3.

The sequence is that of Ig heavy chain V region 5-84 from Mus musculus (Mouse).